A 660-amino-acid chain; its full sequence is Arginine--tRNA ligase, cytoplasmic (660 aa).

The residue at position 1 (M1) is an N-acetylmethionine. Positions 1–72 are could be involved in the assembly of the multisynthetase complex; it reads MDGLVAQCSA…QAERKRPTKN (72 aa). L-arginine contacts are provided by residues 200 to 202, H211, Y384, D388, and Q412; that span reads SPN. Residues 201 to 212 carry the 'HIGH' region motif; that stretch reads PNIAKEMHVGHL. Positions 529–543 are interaction with tRNA; it reads NTAAYLLYAFTRIRS.

This sequence belongs to the class-I aminoacyl-tRNA synthetase family. In terms of assembly, interacts (via N-terminus) with AIMP1 (via N-terminus); this stimulates its catalytic activity. Interacts (via N-terminus) with LARS2 (via C-terminus). Monomer. Part of a multisubunit complex that groups tRNA ligases for Arg (RARS1), Asp (DARS1), Gln (QARS1), Ile (IARS1), Leu (LARS1), Lys (KARS1), Met (MARS1) the bifunctional ligase for Glu and Pro (EPRS1) and the auxiliary subunits AIMP1/p43, AIMP2/p38 and EEF1E1/p18. Interacts with QARS1. Part of a complex composed of RARS1, QARS1 and AIMP1. In terms of tissue distribution, detected in dorsal root ganglion.

The protein localises to the cytoplasm. It is found in the cytosol. It carries out the reaction tRNA(Arg) + L-arginine + ATP = L-arginyl-tRNA(Arg) + AMP + diphosphate. Functionally, forms part of a macromolecular complex that catalyzes the attachment of specific amino acids to cognate tRNAs during protein synthesis. Modulates the secretion of AIMP1 and may be involved in generation of the inflammatory cytokine EMAP2 from AIMP1. The protein is Arginine--tRNA ligase, cytoplasmic (Rars1) of Rattus norvegicus (Rat).